A 132-amino-acid polypeptide reads, in one-letter code: ATP synthase epsilon chain (132 aa).

It belongs to the ATPase epsilon chain family. In terms of assembly, F-type ATPases have 2 components, CF(1) - the catalytic core - and CF(0) - the membrane proton channel. CF(1) has five subunits: alpha(3), beta(3), gamma(1), delta(1), epsilon(1). CF(0) has three main subunits: a, b and c.

It is found in the cell membrane. In terms of biological role, produces ATP from ADP in the presence of a proton gradient across the membrane. The sequence is that of ATP synthase epsilon chain from Desulfitobacterium hafniense (strain DSM 10664 / DCB-2).